The chain runs to 436 residues: Histidine--tRNA ligase (436 aa).

The protein belongs to the class-II aminoacyl-tRNA synthetase family. As to quaternary structure, homodimer.

It is found in the cytoplasm. It carries out the reaction tRNA(His) + L-histidine + ATP = L-histidyl-tRNA(His) + AMP + diphosphate + H(+). The sequence is that of Histidine--tRNA ligase from Prochlorococcus marinus (strain MIT 9313).